We begin with the raw amino-acid sequence, 158 residues long: Leptin-B (158 aa).

The first 19 residues, methionine 1–threonine 19, serve as a signal peptide directing secretion. Cysteine 114 and cysteine 158 are joined by a disulfide.

The protein belongs to the leptin family. Highly expressed in the brain and eye. Expressed at low levels in muscle and skin.

The protein resides in the secreted. Its function is as follows. May function as part of a signaling pathway that acts to regulate the size of the body fat depot. The protein is Leptin-B of Oryzias latipes (Japanese rice fish).